The primary structure comprises 286 residues: Aquaporin PIP1-3 (286 aa).

At Met-1 the chain carries N-acetylmethionine. A disordered region spans residues 1–33; the sequence is MEGKEEDVRVGANKFPERQPIGTSAQTDKDYKE. Residues 1-54 are Cytoplasmic-facing; sequence MEGKEEDVRVGANKFPERQPIGTSAQTDKDYKEPPPAPFFEPGELSSWSFYRAG. Residues 55–75 form a helical membrane-spanning segment; it reads IAEFIATFLFLYITVLTVMGV. At 76 to 81 the chain is on the extracellular side; the sequence is KRAPNM. The chain crosses the membrane as a helical span at residues 82 to 102; it reads CASVGIQGIAWAFGGMIFALV. Topologically, residues 103 to 132 are cytoplasmic; that stretch reads YCTAGISGGHINPAVTFGLFLARKLSLTRA. Positions 114 to 116 match the NPA 1 motif; it reads NPA. A helical membrane pass occupies residues 133-153; sequence VFYIVMQCLGAICGAGVVKGF. Over 154–174 the chain is Extracellular; it reads QPNPYQTLGGGANTVAHGYTK. Residues 175 to 195 traverse the membrane as a helical segment; that stretch reads GSGLGAEIIGTFVLVYTVFSA. At 196-208 the chain is on the cytoplasmic side; that stretch reads TDAKRSARDSHVP. A helical membrane pass occupies residues 209–229; the sequence is ILAPLPIGFAVFLVHLATIPI. Topologically, residues 230-256 are extracellular; that stretch reads TGTGINPARSLGAAIIYNKDHAWDDHW. The NPA 2 signature appears at 235 to 237; sequence NPA. Residues 257-277 form a helical membrane-spanning segment; sequence IFWVGPFIGAALAALYHQLVI. The Cytoplasmic segment spans residues 278 to 286; the sequence is RAIPFKSRS. Ser-284 carries the post-translational modification Phosphoserine.

This sequence belongs to the MIP/aquaporin (TC 1.A.8) family. PIP (TC 1.A.8.11) subfamily. In terms of tissue distribution, expressed in roots, above ground, ripening fruit, flower buds, green siliques and senescing leaves.

It localises to the cell membrane. Its function is as follows. Water channel required to facilitate the transport of water across cell membrane. Its function is impaired by Hg(2+). The sequence is that of Aquaporin PIP1-3 (PIP1-3) from Arabidopsis thaliana (Mouse-ear cress).